The chain runs to 228 residues: Pyridoxamine 5'-phosphate oxidase (228 aa).

20–23 (QYDK) is a pyridoxal 5'-phosphate binding site. Lys29 participates in a covalent cross-link: Glycyl lysine isopeptide (Lys-Gly) (interchain with G-Cter in ubiquitin). 73–76 (RILL) is an FMN binding site. Residue Lys78 participates in pyridoxal 5'-phosphate binding. Residues 88-89 (YS), 95-96 (RK), and Gln118 contribute to the FMN site. Pyridoxal 5'-phosphate contacts are provided by Tyr136, Arg140, and Ser144. Residues 153 to 154 (QS) and Trp199 contribute to the FMN site. 205–207 (RLH) is a pyridoxal 5'-phosphate binding site. Arg209 contacts FMN.

Belongs to the pyridoxamine 5'-phosphate oxidase family. As to quaternary structure, homodimer. FMN serves as cofactor.

Its subcellular location is the mitochondrion intermembrane space. It catalyses the reaction pyridoxamine 5'-phosphate + O2 + H2O = pyridoxal 5'-phosphate + H2O2 + NH4(+). The catalysed reaction is pyridoxine 5'-phosphate + O2 = pyridoxal 5'-phosphate + H2O2. The protein operates within cofactor metabolism; pyridoxal 5'-phosphate salvage; pyridoxal 5'-phosphate from pyridoxamine 5'-phosphate: step 1/1. It functions in the pathway cofactor metabolism; pyridoxal 5'-phosphate salvage; pyridoxal 5'-phosphate from pyridoxine 5'-phosphate: step 1/1. In terms of biological role, catalyzes the oxidation of either pyridoxine 5'-phosphate (PNP) or pyridoxamine 5'-phosphate (PMP) into pyridoxal 5'-phosphate (PLP). This chain is Pyridoxamine 5'-phosphate oxidase (PDX3), found in Saccharomyces cerevisiae (strain ATCC 204508 / S288c) (Baker's yeast).